Consider the following 506-residue polypeptide: tRNA-2-methylthio-N(6)-dimethylallyladenosine synthase (506 aa).

The MTTase N-terminal domain maps to 14–132 (KSYEVRTYGC…LPVLLERARV (119 aa)). Residues Cys23, Cys61, Cys95, Cys169, Cys173, and Cys176 each contribute to the [4Fe-4S] cluster site. One can recognise a Radical SAM core domain in the interval 155 to 386 (RESAYAAWVS…ALQEQISWDE (232 aa)). One can recognise a TRAM domain in the interval 388 to 456 (KKQVGRTLDV…PHHLLAEGTP (69 aa)).

It belongs to the methylthiotransferase family. MiaB subfamily. In terms of assembly, monomer. It depends on [4Fe-4S] cluster as a cofactor.

The protein localises to the cytoplasm. The enzyme catalyses N(6)-dimethylallyladenosine(37) in tRNA + (sulfur carrier)-SH + AH2 + 2 S-adenosyl-L-methionine = 2-methylsulfanyl-N(6)-dimethylallyladenosine(37) in tRNA + (sulfur carrier)-H + 5'-deoxyadenosine + L-methionine + A + S-adenosyl-L-homocysteine + 2 H(+). In terms of biological role, catalyzes the methylthiolation of N6-(dimethylallyl)adenosine (i(6)A), leading to the formation of 2-methylthio-N6-(dimethylallyl)adenosine (ms(2)i(6)A) at position 37 in tRNAs that read codons beginning with uridine. This Streptomyces griseus subsp. griseus (strain JCM 4626 / CBS 651.72 / NBRC 13350 / KCC S-0626 / ISP 5235) protein is tRNA-2-methylthio-N(6)-dimethylallyladenosine synthase.